We begin with the raw amino-acid sequence, 185 residues long: Large ribosomal subunit protein uL5 (185 aa).

The protein belongs to the universal ribosomal protein uL5 family. In terms of assembly, part of the 50S ribosomal subunit; part of the 5S rRNA/L5/L18/L25 subcomplex. Contacts the 5S rRNA and the P site tRNA. Forms a bridge to the 30S subunit in the 70S ribosome.

Its function is as follows. This is one of the proteins that bind and probably mediate the attachment of the 5S RNA into the large ribosomal subunit, where it forms part of the central protuberance. In the 70S ribosome it contacts protein S13 of the 30S subunit (bridge B1b), connecting the 2 subunits; this bridge is implicated in subunit movement. Contacts the P site tRNA; the 5S rRNA and some of its associated proteins might help stabilize positioning of ribosome-bound tRNAs. This is Large ribosomal subunit protein uL5 from Brucella abortus (strain S19).